Here is a 285-residue protein sequence, read N- to C-terminus: Phosphatidylglycerol--prolipoprotein diacylglyceryl transferase (285 aa).

Transmembrane regions (helical) follow at residues 30–50 (LEIRWYALSYVFGILFAHWHI), 67–87 (LMLWAVIGIILGGRTAYILLY), 103–123 (WHGGMSMHGGYVGCIIAVSIV), and 129–149 (VRVMPVLDLCACAAPLGLFLG). R150 contributes to the a 1,2-diacyl-sn-glycero-3-phospho-(1'-sn-glycerol) binding site. 3 consecutive transmembrane segments (helical) span residues 184–204 (SQVYEAMLEGLLPLLFMSILA), 213–233 (FGVLSHMFGAWYGIVRCAVEF), and 252–272 (GQVLSAPIAVVGIFMLVLTVL).

It belongs to the Lgt family.

The protein localises to the cell inner membrane. The catalysed reaction is L-cysteinyl-[prolipoprotein] + a 1,2-diacyl-sn-glycero-3-phospho-(1'-sn-glycerol) = an S-1,2-diacyl-sn-glyceryl-L-cysteinyl-[prolipoprotein] + sn-glycerol 1-phosphate + H(+). Its pathway is protein modification; lipoprotein biosynthesis (diacylglyceryl transfer). Functionally, catalyzes the transfer of the diacylglyceryl group from phosphatidylglycerol to the sulfhydryl group of the N-terminal cysteine of a prolipoprotein, the first step in the formation of mature lipoproteins. This is Phosphatidylglycerol--prolipoprotein diacylglyceryl transferase from Anaplasma marginale (strain Florida).